A 242-amino-acid chain; its full sequence is Ribonuclease 3 (242 aa).

The RNase III domain occupies 7–136; it reads LEALQNLLGY…LLASIYLDGG (130 aa). Residue glutamate 49 participates in Mg(2+) binding. Aspartate 53 is a catalytic residue. Positions 122 and 125 each coordinate Mg(2+). The active site involves glutamate 125. The DRBM domain maps to 167 to 236; sequence DYKTQLQELT…AEKALQIIAA (70 aa).

Belongs to the ribonuclease III family. As to quaternary structure, homodimer. Mg(2+) is required as a cofactor.

It is found in the cytoplasm. It carries out the reaction Endonucleolytic cleavage to 5'-phosphomonoester.. Functionally, digests double-stranded RNA. Involved in the processing of primary rRNA transcript to yield the immediate precursors to the large and small rRNAs (23S and 16S). Processes some mRNAs, and tRNAs when they are encoded in the rRNA operon. Processes pre-crRNA and tracrRNA of type II CRISPR loci if present in the organism. The sequence is that of Ribonuclease 3 from Syntrophobacter fumaroxidans (strain DSM 10017 / MPOB).